The primary structure comprises 163 residues: ATP synthase subunit b', chloroplastic (163 aa).

The chain crosses the membrane as a helical span at residues 26–46; that stretch reads ATLPLMALQFILLTVILTFVF.

Belongs to the ATPase B chain family. F-type ATPases have 2 components, F(1) - the catalytic core - and F(0) - the membrane proton channel. F(1) has five subunits: alpha(3), beta(3), gamma(1), delta(1), epsilon(1). F(0) has four main subunits: a(1), b(1), b'(1) and c(10-14). The alpha and beta chains form an alternating ring which encloses part of the gamma chain. F(1) is attached to F(0) by a central stalk formed by the gamma and epsilon chains, while a peripheral stalk is formed by the delta, b and b' chains.

The protein localises to the plastid. Its subcellular location is the chloroplast thylakoid membrane. In terms of biological role, f(1)F(0) ATP synthase produces ATP from ADP in the presence of a proton or sodium gradient. F-type ATPases consist of two structural domains, F(1) containing the extramembraneous catalytic core and F(0) containing the membrane proton channel, linked together by a central stalk and a peripheral stalk. During catalysis, ATP synthesis in the catalytic domain of F(1) is coupled via a rotary mechanism of the central stalk subunits to proton translocation. Its function is as follows. Component of the F(0) channel, it forms part of the peripheral stalk, linking F(1) to F(0). The b'-subunit is a diverged and duplicated form of b found in plants and photosynthetic bacteria. This is ATP synthase subunit b', chloroplastic from Ochrosphaera neapolitana.